Reading from the N-terminus, the 142-residue chain is Protein KNATM (142 aa).

The stretch at 4-36 forms a coiled coil; it reads KKDENSILENMKQEINHSLKEEAQEEEEILKKR.

Interacts with KNAT1, KNAT3, KNAT4, BEL1, BLH2, BLH4 and BLH9, but not with BLH8 or the KNATM-A and KNATM-C isoforms. Isoforms KNATM-A and KNATM-C: no interactions with KNATM-B, KNOXX or BELL proteins. In terms of tissue distribution, detected in inflorescences, seedlings, leaves, hydathodes, stems, roots, embryo and siliques. Expressed in a polar pattern in organ primordia and at the boundary of mature organs. Detected in the lateral domains of flower meristems, but not in the inflorescence meristem or the vegetative shoot apical meristem.

Its subcellular location is the cytoplasm. It localises to the nucleus. Functionally, transcriptional regulator involved in leaf proximal/distal patterning. May act by sequestering BELL transcription factors. In Arabidopsis thaliana (Mouse-ear cress), this protein is Protein KNATM.